A 118-amino-acid chain; its full sequence is Lutropin subunit beta (118 aa).

Disulfide bonds link C9–C57, C23–C72, C26–C110, C34–C88, C38–C90, and C93–C100. N-linked (GlcNAc...) asparagine glycosylation occurs at N13.

The protein belongs to the glycoprotein hormones subunit beta family. Heterodimer of a common alpha chain and a unique beta chain which confers biological specificity to thyrotropin, lutropin, follitropin and gonadotropin.

The protein localises to the secreted. In terms of biological role, promotes spermatogenesis and ovulation by stimulating the testes and ovaries to synthesize steroids. This chain is Lutropin subunit beta (LHB), found in Balaenoptera acutorostrata (Common minke whale).